The following is a 118-amino-acid chain: UPF0344 protein BLi01172/BL01343 (118 aa).

Helical transmembrane passes span 6–26, 33–53, 62–82, and 89–109; these read ITSW…YSSG, ITHM…AQLF, EYIA…MLLI, and AATG…VLGL.

Belongs to the UPF0344 family.

It is found in the cell membrane. This chain is UPF0344 protein BLi01172/BL01343, found in Bacillus licheniformis (strain ATCC 14580 / DSM 13 / JCM 2505 / CCUG 7422 / NBRC 12200 / NCIMB 9375 / NCTC 10341 / NRRL NRS-1264 / Gibson 46).